Here is a 351-residue protein sequence, read N- to C-terminus: sn-glycerol-3-phosphate import ATP-binding protein UgpC (351 aa).

An ABC transporter domain is found at 4-235 (IVLDNVRKSY…PASTFVATFI (232 aa)). 37-44 (GPSGCGKS) is an ATP binding site.

This sequence belongs to the ABC transporter superfamily. sn-glycerol-3-phosphate importer (TC 3.A.1.1.3) family. In terms of assembly, the complex is composed of two ATP-binding proteins (UgpC), two transmembrane proteins (UgpA and UgpE) and a solute-binding protein (UgpB).

It localises to the cell inner membrane. It catalyses the reaction sn-glycerol 3-phosphate(out) + ATP + H2O = sn-glycerol 3-phosphate(in) + ADP + phosphate + H(+). Functionally, part of the ABC transporter complex UgpBAEC involved in sn-glycerol-3-phosphate (G3P) import. Responsible for energy coupling to the transport system. In Brucella abortus biovar 1 (strain 9-941), this protein is sn-glycerol-3-phosphate import ATP-binding protein UgpC.